We begin with the raw amino-acid sequence, 248 residues long: Ribosomal RNA small subunit methyltransferase G (248 aa).

Residues G85, F90, 137 to 138 (IE), and R156 each bind S-adenosyl-L-methionine.

The protein belongs to the methyltransferase superfamily. RNA methyltransferase RsmG family.

The protein resides in the cytoplasm. In terms of biological role, specifically methylates the N7 position of a guanine in 16S rRNA. This Parasynechococcus marenigrum (strain WH8102) protein is Ribosomal RNA small subunit methyltransferase G.